The primary structure comprises 1559 residues: Bile pigment transporter 1 (1559 aa).

The Vacuolar portion of the chain corresponds to Met1 to Phe29. The helical transmembrane segment at Ile30–Trp50 threads the bilayer. Residues Lys51–Cys84 are Cytoplasmic-facing. Residues Phe85–Tyr105 form a helical membrane-spanning segment. The Vacuolar segment spans residues Pro106–Lys110. A helical transmembrane segment spans residues Lys111–Thr127. At Gln128–Met139 the chain is on the cytoplasmic side. The helical transmembrane segment at Gly140–Arg160 threads the bilayer. The Vacuolar segment spans residues Tyr161–Ala178. The helical transmembrane segment at Met179–Ile199 threads the bilayer. At Phe200–Ala283 the chain is on the cytoplasmic side. A helical membrane pass occupies residues Ile284–Leu304. The ABC transmembrane type-1 1 domain maps to Ile292–Glu578. The Vacuolar portion of the chain corresponds to Leu305–Gly333. Residues Val334–Phe354 traverse the membrane as a helical segment. Residues Tyr355 to Asn410 are Cytoplasmic-facing. A helical transmembrane segment spans residues Ala411–Leu431. The Vacuolar portion of the chain corresponds to Leu432 to Lys434. The chain crosses the membrane as a helical span at residues Ala435–Arg455. Over Lys456 to Asn518 the chain is Cytoplasmic. The helical transmembrane segment at Leu519–Phe539 threads the bilayer. Residues Ser540–Asn560 are Vacuolar-facing. A helical membrane pass occupies residues Ile561–Val581. Topologically, residues Ser582 to Ile972 are cytoplasmic. Positions Leu639–Leu871 constitute an ABC transporter 1 domain. Residue Ser645 is modified to Phosphoserine. Gly672–Ser679 contacts ATP. Positions Ser877–Glu899 are disordered. Phosphoserine is present on Ser885. Position 889 is a phosphothreonine (Thr889). A phosphoserine mark is found at Ser893 and Ser895. Residue Thr916 is modified to Phosphothreonine. Phosphoserine is present on residues Ser927 and Ser931. A Phosphothreonine modification is found at Thr934. Residues Lys973–Phe993 form a helical membrane-spanning segment. The ABC transmembrane type-1 2 domain occupies Val980–Thr1265. Over Asp994–Ala1030 the chain is Vacuolar. A glycan (N-linked (GlcNAc...) asparagine) is linked at Asn1011. Residues Ser1031–Lys1052 form a helical membrane-spanning segment. Topologically, residues Lys1053–Tyr1095 are cytoplasmic. Residues Ile1096 to Tyr1116 traverse the membrane as a helical segment. A topological domain (vacuolar) is located at residue Asn1117. Residues Met1118 to Phe1138 form a helical membrane-spanning segment. Residues Tyr1139–Leu1209 lie on the Cytoplasmic side of the membrane. Residues Gln1210 to Thr1230 form a helical membrane-spanning segment. The Vacuolar segment spans residues Lys1231–Ser1235. A helical transmembrane segment spans residues Ser1236 to Ile1256. Over Val1257–Lys1559 the chain is Cytoplasmic. An ABC transporter 2 domain is found at Ile1302–Glu1553. Gly1336–Ser1343 is a binding site for ATP. The span at His1420–Asp1433 shows a compositional bias: basic and acidic residues. Residues His1420–Gly1439 are disordered.

This sequence belongs to the ABC transporter superfamily.

The protein resides in the vacuole membrane. In terms of biological role, cooperates for the ATP-dependent vacuolar transport of bilirubin and glutathione conjugates. This is Bile pigment transporter 1 (BPT1) from Saccharomyces cerevisiae (strain ATCC 204508 / S288c) (Baker's yeast).